A 393-amino-acid polypeptide reads, in one-letter code: Putative N(4)-(beta-N-acetylglucosaminyl)-L-asparaginase GM21137 (393 aa).

The signal sequence occupies residues 1–23 (MRTHLRASLWVLCLASTAFSILA). 2 cysteine pairs are disulfide-bonded: Cys-97–Cys-102 and Cys-196–Cys-212. The active-site Nucleophile is Thr-243. Substrate contacts are provided by residues 271–274 (RVGD) and 294–297 (TGDG). Cys-354 and Cys-381 form a disulfide bridge.

This sequence belongs to the Ntn-hydrolase family. Heterotetramer of two alpha and two beta chains arranged as a dimer of alpha/beta heterodimers. In terms of processing, cleaved into an alpha and beta chain by autocatalysis; this activates the enzyme. The N-terminal residue of the beta subunit is responsible for the nucleophile hydrolase activity.

It carries out the reaction N(4)-(beta-N-acetyl-D-glucosaminyl)-L-asparagine + H2O = N-acetyl-beta-D-glucosaminylamine + L-aspartate + H(+). Functionally, cleaves the GlcNAc-Asn bond which joins oligosaccharides to the peptide of asparagine-linked glycoproteins. The chain is Putative N(4)-(beta-N-acetylglucosaminyl)-L-asparaginase GM21137 from Drosophila sechellia (Fruit fly).